Consider the following 285-residue polypeptide: ATP synthase gamma chain (285 aa).

The protein belongs to the ATPase gamma chain family. F-type ATPases have 2 components, CF(1) - the catalytic core - and CF(0) - the membrane proton channel. CF(1) has five subunits: alpha(3), beta(3), gamma(1), delta(1), epsilon(1). CF(0) has three main subunits: a, b and c.

The protein resides in the cell membrane. Produces ATP from ADP in the presence of a proton gradient across the membrane. The gamma chain is believed to be important in regulating ATPase activity and the flow of protons through the CF(0) complex. In Dehalococcoides mccartyi (strain ATCC BAA-2100 / JCM 16839 / KCTC 5957 / BAV1), this protein is ATP synthase gamma chain.